Reading from the N-terminus, the 146-residue chain is MAKISVAAAALLVLMALGHATAFRATVTTTVVEEENQEECREQMQRQQMLSHCRMYMRQQMEESPYQTMPRRGMEPHMSECCEQLEGMDESCRCEGLRMMMMRMQQEEMQPRGEQMRRMMRLAENIPSRCNLSPMRCPMGGSIAGF.

A signal peptide spans 1–22; sequence MAKISVAAAALLVLMALGHATA. Positions 23–36 are excised as a propeptide; it reads FRATVTTTVVEEEN. Glutamine 37 carries the pyrrolidone carboxylic acid modification. 4 disulfide bridges follow: cysteine 40–cysteine 92, cysteine 53–cysteine 81, cysteine 82–cysteine 130, and cysteine 94–cysteine 137. Residues 65 to 69 constitute a propeptide that is removed on maturation; that stretch reads PYQTM. The propeptide occupies 143–146; the sequence is IAGF.

Belongs to the 2S seed storage albumins family. In terms of assembly, the mature protein consists of a small and a large chain linked by disulfide bonds.

Its function is as follows. This is a 2S seed storage protein. The chain is 2S sulfur-rich seed storage protein 1 (BE2S1) from Bertholletia excelsa (Brazil nut).